A 292-amino-acid polypeptide reads, in one-letter code: Chondroitin proteoglycan 3 (292 aa).

An N-terminal signal peptide occupies residues 1 to 17; the sequence is MRFVFIIALLLIGASLA. Residues 28–103 form a disordered region; sequence DVSASEDEFS…EGSGDTSPVV (76 aa). Over residues 38 to 80 the composition is skewed to low complexity; the sequence is GDSSGEISGESSGEASGEASGEASGEASGEASGESSGETSGES. The segment covering 81–96 has biased composition (acidic residues); that stretch reads SGDEETSGEGSGEEGS. N-linked (GlcNAc...) asparagine glycosylation is found at asparagine 174 and asparagine 254.

The chain is Chondroitin proteoglycan 3 from Caenorhabditis elegans.